A 247-amino-acid polypeptide reads, in one-letter code: Carboxy-S-adenosyl-L-methionine synthase (247 aa).

S-adenosyl-L-methionine-binding positions include Tyr-39, 64 to 66 (GCS), 89 to 90 (DN), 117 to 118 (DI), Asn-132, and Arg-199.

The protein belongs to the class I-like SAM-binding methyltransferase superfamily. Cx-SAM synthase family. Homodimer.

It catalyses the reaction prephenate + S-adenosyl-L-methionine = carboxy-S-adenosyl-L-methionine + 3-phenylpyruvate + H2O. In terms of biological role, catalyzes the conversion of S-adenosyl-L-methionine (SAM) to carboxy-S-adenosyl-L-methionine (Cx-SAM). This chain is Carboxy-S-adenosyl-L-methionine synthase, found in Citrobacter koseri (strain ATCC BAA-895 / CDC 4225-83 / SGSC4696).